We begin with the raw amino-acid sequence, 183 residues long: Ribosome rescue factor SmrB (183 aa).

In terms of domain architecture, Smr spans 98–173; that stretch reads LDLHGLTQLQ…GDAALLVLIE (76 aa).

It belongs to the SmrB family. In terms of assembly, associates with collided ribosomes, but not with correctly translating polysomes.

Acts as a ribosome collision sensor. Detects stalled/collided disomes (pairs of ribosomes where the leading ribosome is stalled and a second ribosome has collided with it) and endonucleolytically cleaves mRNA at the 5' boundary of the stalled ribosome. Stalled/collided disomes form a new interface (primarily via the 30S subunits) that binds SmrB. Cleaved mRNA becomes available for tmRNA ligation, leading to ribosomal subunit dissociation and rescue of stalled ribosomes. The protein is Ribosome rescue factor SmrB of Salmonella paratyphi A (strain ATCC 9150 / SARB42).